We begin with the raw amino-acid sequence, 644 residues long: Biosynthetic arginine decarboxylase (644 aa).

Lys-105 is modified (N6-(pyridoxal phosphate)lysine). 287–297 (LDVGGGLGIDY) contacts substrate.

Belongs to the Orn/Lys/Arg decarboxylase class-II family. SpeA subfamily. Requires Mg(2+) as cofactor. Pyridoxal 5'-phosphate is required as a cofactor.

The enzyme catalyses L-arginine + H(+) = agmatine + CO2. Functionally, catalyzes the biosynthesis of agmatine from arginine. The polypeptide is Biosynthetic arginine decarboxylase (Parasynechococcus marenigrum (strain WH8102)).